The sequence spans 642 residues: MFIFPKDENRRETLTTKLRFSADHLTFTTVTEKLRATAWRFAFSSRAKSVVAMAANEEFTGNLKRQLAKLFDVSLKLTVPDEPSVEPLVAASALGKFGDYQCNNAMGLWSIIKGKGTQFKGPPAVGQALVKSLPTSEMVESCSVAGPGFINVVLSAKWMAKSIENMLIDGVDTWAPTLSVKRAVVDFSSPNIAKEMHVGHLRSTIIGDTLARMLEYSHVEVLRRNHVGDWGTQFGMLIEYLFEKFPDTDSVTETAIGDLQVFYKASKHKFDLDEAFKEKAQQAVVRLQGGDPVYRKAWAKICDISRTEFAKVYQRLRVELEEKGESFYNPHIAKVIEELNSKGLVEESEGARVIFLEGFDIPLMVVKSDGGFNYASTDLTALWYRLNEEKAEWIIYVTDVGQQQHFNMFFKAARKAGWLPDNDKTYPRVNHVGFGLVLGEDGKRFRTRATDVVRLVDLLDEAKTRSKLALIERGKDKEWTPEELDQTAEAVGYGAVKYADLKNNRLTNYTFSFDQMLNDKGNTAVYLLYAHARICSIIRKSGKDIDELKKTGKLALDHADERALGLHLLRFAETVEEACTNLLPSVLCEYLYNLSEHFTRFYSNCQVNGSPEETSRLLLCEATAIVMRKCFHLLGITPVYKI.

The transit peptide at 1–53 directs the protein to the chloroplast and mitochondrion; sequence MFIFPKDENRRETLTTKLRFSADHLTFTTVTEKLRATAWRFAFSSRAKSVVAM. At alanine 54 the chain carries N-acetylalanine. Positions 190 to 201 match the 'HIGH' region motif; sequence PNIAKEMHVGHL.

It belongs to the class-I aminoacyl-tRNA synthetase family.

It is found in the plastid. The protein localises to the chloroplast. Its subcellular location is the mitochondrion. It carries out the reaction tRNA(Arg) + L-arginine + ATP = L-arginyl-tRNA(Arg) + AMP + diphosphate. In terms of biological role, forms part of a macromolecular complex that catalyzes the attachment of specific amino acids to cognate tRNAs during protein synthesis. The protein is Arginine--tRNA ligase, chloroplastic/mitochondrial of Arabidopsis thaliana (Mouse-ear cress).